The sequence spans 214 residues: Sugar fermentation stimulation protein homolog (214 aa).

It belongs to the SfsA family.

The polypeptide is Sugar fermentation stimulation protein homolog (Aquifex aeolicus (strain VF5)).